Consider the following 97-residue polypeptide: UPF0125 protein plu3376 (97 aa).

Belongs to the UPF0125 (RnfH) family.

This Photorhabdus laumondii subsp. laumondii (strain DSM 15139 / CIP 105565 / TT01) (Photorhabdus luminescens subsp. laumondii) protein is UPF0125 protein plu3376.